Reading from the N-terminus, the 307-residue chain is uncharacterized protein (307 aa).

This is an uncharacterized protein from Rickettsia conorii (strain ATCC VR-613 / Malish 7).